Consider the following 327-residue polypeptide: Probable cell division protein WhiA (327 aa).

Positions 275 to 308 form a DNA-binding region, H-T-H motif; it reads SLEELGRLADPQMTKDAVAGRIRRLLTMADKRAE.

The protein belongs to the WhiA family.

In terms of biological role, involved in cell division and chromosome segregation. The protein is Probable cell division protein WhiA of Corynebacterium glutamicum (strain ATCC 13032 / DSM 20300 / JCM 1318 / BCRC 11384 / CCUG 27702 / LMG 3730 / NBRC 12168 / NCIMB 10025 / NRRL B-2784 / 534).